The primary structure comprises 244 residues: Ribonuclease HII (244 aa).

One can recognise an RNase H type-2 domain in the interval 31-222 (RLIAGVDEAG…VRLALQGREG (192 aa)). 3 residues coordinate a divalent metal cation: Asp37, Glu38, and Asp130.

Belongs to the RNase HII family. Mn(2+) serves as cofactor. The cofactor is Mg(2+).

The protein localises to the cytoplasm. It carries out the reaction Endonucleolytic cleavage to 5'-phosphomonoester.. Functionally, endonuclease that specifically degrades the RNA of RNA-DNA hybrids. In Xanthomonas axonopodis pv. citri (strain 306), this protein is Ribonuclease HII.